The primary structure comprises 425 residues: Serine--tRNA ligase (425 aa).

229-231 is a binding site for L-serine; that stretch reads TSE. Residues 259 to 261 and Val-275 each bind ATP; that span reads RKE. L-serine is bound at residue Glu-282. 349-352 provides a ligand contact to ATP; that stretch reads EITS. Thr-384 is an L-serine binding site.

This sequence belongs to the class-II aminoacyl-tRNA synthetase family. Type-1 seryl-tRNA synthetase subfamily. As to quaternary structure, homodimer. The tRNA molecule binds across the dimer.

Its subcellular location is the cytoplasm. It catalyses the reaction tRNA(Ser) + L-serine + ATP = L-seryl-tRNA(Ser) + AMP + diphosphate + H(+). The catalysed reaction is tRNA(Sec) + L-serine + ATP = L-seryl-tRNA(Sec) + AMP + diphosphate + H(+). It functions in the pathway aminoacyl-tRNA biosynthesis; selenocysteinyl-tRNA(Sec) biosynthesis; L-seryl-tRNA(Sec) from L-serine and tRNA(Sec): step 1/1. Catalyzes the attachment of serine to tRNA(Ser). Is also able to aminoacylate tRNA(Sec) with serine, to form the misacylated tRNA L-seryl-tRNA(Sec), which will be further converted into selenocysteinyl-tRNA(Sec). This is Serine--tRNA ligase from Borreliella afzelii (strain PKo) (Borrelia afzelii).